We begin with the raw amino-acid sequence, 673 residues long: uncharacterized protein (673 aa).

Residues 1-208 (MSTHSNDYFS…STGQLELPPD (208 aa)) lie on the Cytoplasmic side of the membrane. Phosphoserine occurs at positions 57, 112, and 172. A helical membrane pass occupies residues 209–229 (GGYGWVVTFCVFLTMFSTWGC). N-linked (GlcNAc...) asparagine glycosylation is present at Asn-230. The Lumenal segment spans residues 230–255 (NASFGVDLAYYLNHDTYPGASKYDYA). Residues 256 to 276 (LIAGLTVFLGQLLSPLVMALM) form a helical membrane-spanning segment. Position 277 (Arg-277) is a topological domain, cytoplasmic. The chain crosses the membrane as a helical span at residues 278 to 298 (IIGLRTTMLFGDAVMLAAYLL). Residues 299-315 (ASFTTKLWQLYVTQGFM) lie on the Lumenal side of the membrane. The helical transmembrane segment at 316-336 (VGCSISLIFVPATTVLPGWFL) threads the bilayer. Residues 337–339 (KKR) lie on the Cytoplasmic side of the membrane. Residues 340 to 360 (AVAMGVSLLGTGAGGVVYGLA) traverse the membrane as a helical segment. The Lumenal portion of the chain corresponds to 361-372 (TNKMLSDFGNTR). Residues 373–393 (WCLRIIGISCSISVLVAIALL) traverse the membrane as a helical segment. Over 394–426 (KERNPTPAIGLKSPRAMFEQLKAMFSLKVITKP) the chain is Cytoplasmic. Residues 427–447 (FVVLIALWFMFALFAYNMMVF) form a helical membrane-spanning segment. Over 448–504 (TLSSYAISKGLSSHDASTLTAILNGSQSIGRPLMGLAGDKFGRANVTIVLTTLLTIY) the chain is Lumenal. Residues Asn-471 and Asn-492 are each glycosylated (N-linked (GlcNAc...) asparagine). The chain crosses the membrane as a helical span at residues 505–525 (MFAFWIPAHTFVQLIFFSILV). Residues 526 to 549 (GSCVGVANVMNTVLIADMVKPEEF) lie on the Cytoplasmic side of the membrane. A helical transmembrane segment spans residues 550–570 (LPAWAFVNYCGAPFLLVCEVI). The Lumenal segment spans residues 571-584 (AQALTVEKDKSNPY). The chain crosses the membrane as a helical span at residues 585–605 (LHAQIFCGCCFIAALILISIL). Over 606–673 (REYSIRMKLT…FLRMVYPMKV (68 aa)) the chain is Cytoplasmic. A Phosphoserine modification is found at Ser-637.

It belongs to the major facilitator superfamily. Monocarboxylate porter (TC 2.A.1.13) family.

The protein localises to the endoplasmic reticulum membrane. This is an uncharacterized protein from Saccharomyces cerevisiae (strain ATCC 204508 / S288c) (Baker's yeast).